Consider the following 304-residue polypeptide: Dihydroorotate dehydrogenase B (NAD(+)), catalytic subunit (304 aa).

FMN is bound by residues Ser-21 and 45–46 (KA). Substrate is bound by residues Lys-45 and 69–73 (NAIGL). Residues Asn-99 and Asn-127 each contribute to the FMN site. Asn-127 serves as a coordination point for substrate. The active-site Nucleophile is Cys-130. FMN-binding residues include Lys-165 and Ile-191. Position 192–193 (192–193 (NT)) interacts with substrate. FMN-binding positions include Gly-217, 243-244 (GG), and 265-266 (GT).

This sequence belongs to the dihydroorotate dehydrogenase family. Type 1 subfamily. Heterotetramer of 2 PyrK and 2 PyrD type B subunits. FMN is required as a cofactor.

The protein localises to the cytoplasm. The enzyme catalyses (S)-dihydroorotate + NAD(+) = orotate + NADH + H(+). The protein operates within pyrimidine metabolism; UMP biosynthesis via de novo pathway; orotate from (S)-dihydroorotate (NAD(+) route): step 1/1. Catalyzes the conversion of dihydroorotate to orotate with NAD(+) as electron acceptor. This Listeria monocytogenes serovar 1/2a (strain ATCC BAA-679 / EGD-e) protein is Dihydroorotate dehydrogenase B (NAD(+)), catalytic subunit (pyrD).